A 459-amino-acid chain; its full sequence is GTPase Der (459 aa).

2 EngA-type G domains span residues Pro-4 to Ala-169 and Ile-179 to Arg-355. GTP contacts are provided by residues Gly-10 to Ser-17, Asp-57 to Leu-61, Asn-120 to Glu-123, Gly-185 to Ser-192, Asp-232 to Ile-236, and Asn-297 to Asp-300. Residues Lys-356–Ser-441 enclose the KH-like domain.

Belongs to the TRAFAC class TrmE-Era-EngA-EngB-Septin-like GTPase superfamily. EngA (Der) GTPase family. In terms of assembly, associates with the 50S ribosomal subunit.

In terms of biological role, GTPase that plays an essential role in the late steps of ribosome biogenesis. In Synechococcus sp. (strain JA-3-3Ab) (Cyanobacteria bacterium Yellowstone A-Prime), this protein is GTPase Der.